The chain runs to 418 residues: Enolase 1 (418 aa).

Gln162 serves as a coordination point for (2R)-2-phosphoglycerate. Catalysis depends on Glu204, which acts as the Proton donor. Mg(2+) is bound by residues Asp241, Glu285, and Asp312. Residues Lys337, Arg366, Ser367, and Lys388 each coordinate (2R)-2-phosphoglycerate. Lys337 acts as the Proton acceptor in catalysis.

The protein belongs to the enolase family. It depends on Mg(2+) as a cofactor.

It is found in the cytoplasm. Its subcellular location is the secreted. The protein localises to the cell surface. The catalysed reaction is (2R)-2-phosphoglycerate = phosphoenolpyruvate + H2O. Its pathway is carbohydrate degradation; glycolysis; pyruvate from D-glyceraldehyde 3-phosphate: step 4/5. Catalyzes the reversible conversion of 2-phosphoglycerate (2-PG) into phosphoenolpyruvate (PEP). It is essential for the degradation of carbohydrates via glycolysis. This chain is Enolase 1, found in Lactococcus lactis subsp. cremoris (strain SK11).